Reading from the N-terminus, the 505-residue chain is Peroxisome proliferator-activated receptor gamma (505 aa).

O-linked (GlcNAc) threonine glycosylation is present at Thr84. The residue at position 112 (Ser112) is a Phosphoserine; by MAPK. The nuclear receptor DNA-binding region spans 136–210 (AIECRVCGDK…VGMSHNAIRF (75 aa)). 2 consecutive NR C4-type zinc fingers follow at residues 139 to 159 (CRVCGDKASGFHYGVHACEGC) and 176 to 198 (CDLNCRIHKKSRNKCQYCRFQKC). Residues 205–280 (HNAIRFGRMP…DKSPFVIYDM (76 aa)) are interaction with FAM120B. One can recognise an NR LBD domain in the interval 238–503 (DLRALAKHLY…HPLLQEIYKD (266 aa)). Lys252 is covalently cross-linked (Glycyl lysine isopeptide (Lys-Gly) (interchain with G-Cter in ubiquitin)). The 9aaTAD signature appears at 495-503 (PLLQEIYKD).

Belongs to the nuclear hormone receptor family. NR1 subfamily. Heterodimer with other nuclear receptors, such as RXRA. The heterodimer with the retinoic acid receptor RXRA is called adipocyte-specific transcription factor ARF6. Interacts with NCOA6 coactivator, leading to a strong increase in transcription of target genes. Interacts with coactivator PPARBP, leading to a mild increase in transcription of target genes. Interacts with NOCA7 in a ligand-inducible manner. Interacts with NCOA1 and NCOA2 LXXLL motifs. Interacts with ASXL1, ASXL2, DNTTIP2, FAM120B, MAP2K1/MEK1, NR0B2, PDPK1, PRDM16, PRMT2 and TGFB1I1. Interacts (when activated by agonist) with PPP5C. Interacts with HELZ2 and THRAP3; the interaction stimulates the transcriptional activity of PPARG. Interacts with PER2, the interaction is ligand dependent and blocks PPARG recruitment to target promoters. Interacts with NOCT. Interacts with FOXO1 (acetylated form). Interacts with ACTN4. Interacts (when in the liganded conformation) with GPS2. Interacts with CRY1 and CRY2 in a ligand-dependent manner. In the absence of hormonal ligand, interacts with TACC1. In macrophages, interacts with PAQR3 and STUB1; the interactions promote PPARG poylubiquitination and STUB1-mediated degradation. In terms of processing, O-GlcNAcylation at Thr-84 reduces transcriptional activity in adipocytes. Phosphorylated in basal conditions and dephosphorylated when treated with the ligand. May be dephosphorylated by PPP5C. The phosphorylated Ser-112 form is recognized by PER2 and repressed, dephosphorylation at Ser-112 induces adipogenic activity. Ser-112 phosphorylation levels are reduced by 65% in brown adipose tissue compared to white adipose tissue. Post-translationally, ubiquitinated by E3 ubiquitin-protein ligase complex containing FBXO9; leading to proteasomal degradation. In terms of processing, ubiquitinated by E3 ubiquitin-protein ligase complex containing FBXO9; leading to proteasomal degradation. Ubiquitinated at Lys-252 by TRIM55 leading to proteasomal degradation. Ubiquitinated by E3 ubiquitin-protein ligase STUB1/CHIP; leading to proteasomal degradation. In terms of tissue distribution, highest expression in white and brown adipose tissue. Also found in liver, skeletal muscle, heart, adrenal gland, spleen, kidney and intestine. Isoform 2 is more abundant than isoform 1 in adipose tissue.

The protein resides in the nucleus. Its subcellular location is the cytoplasm. PDPK1 activates its transcriptional activity independently of its kinase activity. Its function is as follows. Nuclear receptor that binds peroxisome proliferators such as hypolipidemic drugs and fatty acids. Once activated by a ligand, the nuclear receptor binds to DNA specific PPAR response elements (PPRE) and modulates the transcription of its target genes, such as acyl-CoA oxidase. It therefore controls the peroxisomal beta-oxidation pathway of fatty acids. Key regulator of adipocyte differentiation and glucose homeostasis. ARF6 acts as a key regulator of the tissue-specific adipocyte P2 (aP2) enhancer. Acts as a critical regulator of gut homeostasis by suppressing NF-kappa-B-mediated pro-inflammatory responses. Plays a role in the regulation of cardiovascular circadian rhythms by regulating the transcription of BMAL1 in the blood vessels. This is Peroxisome proliferator-activated receptor gamma (Pparg) from Mus musculus (Mouse).